Here is a 219-residue protein sequence, read N- to C-terminus: Multiple organellar RNA editing factor 2, chloroplastic (219 aa).

The N-terminal 48 residues, 1 to 48 (MALPLSGTRHLTRALLSNVTLMAPPRIPSSVHYGGSRLGCSTRFFSIR), are a transit peptide targeting the chloroplast. Residues 182-219 (VQRSPERQRRVEPQPQRAQDRPRYNDRTRYSRRRENTR) are disordered. Residues 185 to 219 (SPERQRRVEPQPQRAQDRPRYNDRTRYSRRRENTR) show a composition bias toward basic and acidic residues.

Belongs to the MORF family. As to quaternary structure, homodimer and heterodimer with MORF9. Interacts with protoporphyrinogen oxidase 1 PPOX1. Heterodimers with MORF8/RIP1 and MORF9/RIP9. Interacts with PCMP-A2/PMD1. Interacts with ORRM1. Interacts with ORRM6.

The protein resides in the plastid. It is found in the chloroplast. Functionally, involved in plastid rRNA processing and consequently in translation and early chloroplast differentiation. Involved in organellar RNA editing. Required for the processing of multiple editing sites in plastids. The polypeptide is Multiple organellar RNA editing factor 2, chloroplastic (Arabidopsis thaliana (Mouse-ear cress)).